Reading from the N-terminus, the 286-residue chain is MSIQFNQVSYIYQQGTPYEFEAIKNVSLTLEQGKYYAIIGQTGSGKSTLIQHLNALLKPTTGSVNINGLEVTNKTKDKHLRHIRKEVGIVFQFPESQLFEDSVEKEIEFGPKNFNMNLKNVKDKAFQLLLELGFSRNVMSSSPFQMSGGQMRKIAIVSILAMDPQVIILDEPTAGLDPNSKHQVMSLIKKIQIEENKTIILVSHDMDDVARYSDEVVVMNKGTIVEKSNPRNLFNQKTQLLKWHIELPKVVKLQKDIEKKYNMLFPKLAMNEEEFVKLYKEWHHEE.

An ABC transporter domain is found at 3–246 (IQFNQVSYIY…KTQLLKWHIE (244 aa)). 40–47 (GQTGSGKS) is an ATP binding site.

The protein belongs to the ABC transporter superfamily. Energy-coupling factor EcfA family. In terms of assembly, forms a stable energy-coupling factor (ECF) transporter complex composed of 2 membrane-embedded substrate-binding proteins (S component), 2 ATP-binding proteins (A component) and 2 transmembrane proteins (T component).

It localises to the cell membrane. ATP-binding (A) component of a common energy-coupling factor (ECF) ABC-transporter complex. Unlike classic ABC transporters this ECF transporter provides the energy necessary to transport a number of different substrates. This Staphylococcus epidermidis (strain ATCC 35984 / DSM 28319 / BCRC 17069 / CCUG 31568 / BM 3577 / RP62A) protein is Energy-coupling factor transporter ATP-binding protein EcfA2.